The sequence spans 327 residues: Vacuolar protein sorting-associated protein 26A (327 aa).

The tract at residues 306–327 is disordered; the sequence is RTNFHQRFESPESQASAEQPEM. Ser315 carries the phosphoserine modification. The span at 316–327 shows a compositional bias: polar residues; sequence PESQASAEQPEM.

It belongs to the VPS26 family. In terms of assembly, component of the heterotrimeric retromer cargo-selective complex (CSC), also described as vacuolar protein sorting subcomplex (VPS), formed by VPS26 (VPS26A or VPS26B), VPS29 and VPS35. The CSC has a highly elongated structure with VPS26 and VPS29 binding independently at opposite distal ends of VPS35 as central platform. The CSC is believed to associate with variable sorting nexins to form functionally distinct retromer complex variants. The originally described retromer complex (also called SNX-BAR retromer) is a pentamer containing the CSC and a heterodimeric membrane-deforming subcomplex formed between SNX1 or SNX2 and SNX5 or SNX6 (also called SNX-BAR subcomplex); the respective CSC and SNX-BAR subcomplexes associate with low affinity. The CSC associates with SNX3 to form a SNX3-retromer complex. The CSC associates with SNX27, the WASH complex and the SNX-BAR subcomplex to form the SNX27-retromer complex. Interacts with VPS29, VPS35, SNX27, SNX1, SNX2, SNX5, SNX6, SNX3, RAB7A, ECPAS, EHD1, WASHC5, SORL1.

It localises to the cytoplasm. The protein localises to the endosome membrane. It is found in the early endosome. Acts as a component of the retromer cargo-selective complex (CSC). The CSC is believed to be the core functional component of retromer or respective retromer complex variants acting to prevent missorting of selected transmembrane cargo proteins into the lysosomal degradation pathway. The recruitment of the CSC to the endosomal membrane involves RAB7A and SNX3. The SNX-BAR retromer mediates retrograde transport of cargo proteins from endosomes to the trans-Golgi network (TGN) and is involved in endosome-to-plasma membrane transport for cargo protein recycling. The SNX3-retromer mediates the retrograde endosome-to-TGN transport of WLS distinct from the SNX-BAR retromer pathway. The SNX27-retromer is believed to be involved in endosome-to-plasma membrane trafficking and recycling of a broad spectrum of cargo proteins. The CSC complex seems to act as recruitment hub for other proteins, such as the WASH complex and TBC1D5. Required for retrograde transport of lysosomal enzyme receptor IGF2R. Required to regulate transcytosis of the polymeric immunoglobulin receptor (pIgR-pIgA). Required for the endosomal localization of WASHC2 (indicative for the WASH complex). Required for the endosomal localization of TBC1D5. Mediates retromer cargo recognition of SORL1 and is involved in trafficking of SORL1 implicated in sorting and processing of APP. Involved in retromer-independent lysosomal sorting of F2R. Involved in recycling of ADRB2. Acts redundantly with VSP26B in SNX-27 mediated endocytic recycling of SLC2A1/GLUT1. Enhances the affinity of SNX27 for PDZ-binding motifs in cargo proteins. The chain is Vacuolar protein sorting-associated protein 26A (Vps26a) from Rattus norvegicus (Rat).